The sequence spans 183 residues: Photosystem I assembly protein Ycf4 (183 aa).

2 consecutive transmembrane segments (helical) span residues 17–39 (NYLL…FLSY) and 59–81 (FIPQ…IYIY).

This sequence belongs to the Ycf4 family.

The protein localises to the plastid. The protein resides in the chloroplast thylakoid membrane. Seems to be required for the assembly of the photosystem I complex. This Cyanidium caldarium (Red alga) protein is Photosystem I assembly protein Ycf4.